The following is a 361-amino-acid chain: Glyceraldehyde-3-phosphate dehydrogenase, glycosomal (361 aa).

NAD(+) contacts are provided by residues 13–14, D39, Q92, and S135; that span reads RI. D-glyceraldehyde 3-phosphate is bound by residues 166-168, T198, 227-228, and R250; these read SCT and TG. C167 serves as the catalytic Nucleophile. N336 contributes to the NAD(+) binding site. A Microbody targeting signal motif is present at residues 359 to 361; sequence SKM.

The protein belongs to the glyceraldehyde-3-phosphate dehydrogenase family. Homotetramer.

The protein resides in the glycosome. It carries out the reaction D-glyceraldehyde 3-phosphate + phosphate + NAD(+) = (2R)-3-phospho-glyceroyl phosphate + NADH + H(+). It participates in carbohydrate degradation; glycolysis; pyruvate from D-glyceraldehyde 3-phosphate: step 1/5. The sequence is that of Glyceraldehyde-3-phosphate dehydrogenase, glycosomal (GAPG) from Leishmania mexicana.